We begin with the raw amino-acid sequence, 271 residues long: Transmembrane protein 150A (271 aa).

The Cytoplasmic portion of the chain corresponds to 1–2 (MT). A helical membrane pass occupies residues 3-23 (AWILLPVSLSAFSITGIWTVY). Residues 24–75 (AMAVMNHHVCPVENWSYNESCPPDPAEQGGPKTCCTLDDVPLISKCGSYPPE) lie on the Extracellular side of the membrane. Residues Asn37 and Asn41 are each glycosylated (N-linked (GlcNAc...) asparagine). The helical transmembrane segment at 76-96 (SCLFSLIGNMGAFMVALICLL) threads the bilayer. Over 97-108 (RYGQLLEQSRHS) the chain is Cytoplasmic. The helical transmembrane segment at 109-129 (WVNTTALITGCTNAAGLLVVG) threads the bilayer. Residues 130 to 140 (NFQVDHARSLH) are Extracellular-facing. A helical membrane pass occupies residues 141 to 161 (YVGAGVAFPAGLLFVCLHCAL). Residues 162 to 178 (SYQGATAPLDLAVAYLR) are Cytoplasmic-facing. The helical transmembrane segment at 179–199 (SVLAVIAFITLVLSGVFFVHE) threads the bilayer. Over 200–211 (SSQLQHGAALCE) the chain is Extracellular. Residues 212–232 (WVCVIDILIFYGTFSYEFGAV) traverse the membrane as a helical segment. The Cytoplasmic segment spans residues 233–271 (SSDTLVAALQPTPGRACKSSGSSSTSTHLNCAPESIAMI).

This sequence belongs to the DRAM/TMEM150 family. In terms of assembly, interacts (via C-terminal cytoplasmic tail) with PI4KA.

The protein localises to the cell membrane. Functionally, regulates localization of phosphatidylinositol 4-kinase (PI4K) to the plasma membrane, possibly by reducing the association of TTC7 (TTC7A or TTC7B) with the PI4K complex. Acts as a regulator of phosphatidylinositol 4-phosphate (PtdIns(4)P) synthesis. May also play a role in fasting-induced catabolism. The sequence is that of Transmembrane protein 150A (TMEM150A) from Homo sapiens (Human).